The following is a 183-amino-acid chain: Large ribosomal subunit protein eL18 (183 aa).

A disordered region spans residues 151-183 (HFGPAPGAPRSHTKPYVRSKGHEQAKPSRRSNV).

Belongs to the eukaryotic ribosomal protein eL18 family.

The protein resides in the cytoplasm. This Plutella xylostella (Diamondback moth) protein is Large ribosomal subunit protein eL18 (RpL18).